Here is a 197-residue protein sequence, read N- to C-terminus: Imidazoleglycerol-phosphate dehydratase (197 aa).

Belongs to the imidazoleglycerol-phosphate dehydratase family.

The protein localises to the cytoplasm. It catalyses the reaction D-erythro-1-(imidazol-4-yl)glycerol 3-phosphate = 3-(imidazol-4-yl)-2-oxopropyl phosphate + H2O. It functions in the pathway amino-acid biosynthesis; L-histidine biosynthesis; L-histidine from 5-phospho-alpha-D-ribose 1-diphosphate: step 6/9. This Xanthobacter autotrophicus (strain ATCC BAA-1158 / Py2) protein is Imidazoleglycerol-phosphate dehydratase.